Consider the following 418-residue polypeptide: Deubiquitinase and deneddylase Dub1 (418 aa).

Residues 1 to 10 show a composition bias toward polar residues; sequence MLSPTNSISK. Positions 1 to 23 are disordered; the sequence is MLSPTNSISKTAPVPPQDSSKPV. A helical transmembrane segment spans residues 40–60; sequence TALAVLLVVVTLGLILLFYSF. The tract at residues 72 to 144 is disordered; sequence TRPSTKEQPT…PLPPKAPKPV (73 aa). The segment covering 86–141 has biased composition (pro residues); it reads VPLPSPPLAVPRPSTPPPPVISRPSTPPAPTPAISPPSTPSAPKPSTPPPLPPKAP. Catalysis depends on residues His-288, Asp-305, and Cys-358.

The protein belongs to the peptidase C48 family.

It localises to the secreted. It is found in the host cell. The protein resides in the membrane. Effector proteins function to alter host cell physiology and promote bacterial survival in host tissues. This protease possesses deubiquitinating and deneddylating activities. The chain is Deubiquitinase and deneddylase Dub1 (cdu1) from Chlamydia trachomatis serovar B (strain TZ1A828/OT).